Consider the following 987-residue polypeptide: Nuclear matrix constituent protein 1b (987 aa).

The disordered stretch occupies residues 1-25 (MASPRSAGGVGGGGGGGGGSGGAAA). The segment covering 8-24 (GGVGGGGGGGGGSGGAA) has biased composition (gly residues). Coiled-coil stretches lie at residues 403–545 (LAEL…ERRA) and 594–717 (LSKI…DREA). Basic and acidic residues-rich tracts occupy residues 752–764 (SDIN…HDNS) and 898–908 (CKEHEYGDKGP). Disordered stretches follow at residues 752-775 (SDIN…FGRK) and 887-987 (HDEA…FLIT). Positions 944–954 (ATVSATETSNV) are enriched in polar residues. The span at 956–973 (GPEDNNDSDEEDEEEEEE) shows a compositional bias: acidic residues.

Belongs to the CRWN family. Interacts with SWI3C.

The protein localises to the nucleus matrix. It is found in the nucleus lamina. Architectural component of nuclear structure that plays different roles in controlling nuclear size and morphology. Involved in the modification of chromatin accessibility by interacting with SWI3C, a component of the chromatin-remodeling complex, to thus reduce the suppression effect of the complex. Acts as positive regulator of drought resistance and modulates root growth. Positively regulates the expression of genes related to root growth and drought resistance. This Oryza sativa subsp. japonica (Rice) protein is Nuclear matrix constituent protein 1b.